The primary structure comprises 363 residues: Lovastatin nonaketide synthase, enoyl reductase component lovC (363 aa).

NADP(+)-binding positions include 51 to 54 (SDTK), 174 to 177 (STAT), 197 to 200 (SPHN), Tyr-215, 262 to 263 (LN), Thr-280, and 351 to 352 (LS). The tract at residues 226–272 (TYTKNNLRYALDCITNVESTTFCFAAIGRAGGHYVSLNPFPEHAATR) is lovB-binding.

It belongs to the zinc-containing alcohol dehydrogenase family. In terms of assembly, each MAT domain from the lovB homodimer binds one lovC molecule to form the final active lovB-lovC megasynthase complex.

It carries out the reaction holo-[lovastatin nonaketide synthase] + 9 malonyl-CoA + S-adenosyl-L-methionine + 11 NADPH + 19 H(+) = dihydromonacolin L-[lovastatin nonaketide synthase] + S-adenosyl-L-homocysteine + 9 CO2 + 11 NADP(+) + 9 CoA + 6 H2O. The protein operates within polyketide biosynthesis; lovastatin biosynthesis. In terms of biological role, trans-enoyl reductase; part of the gene cluster that mediates the biosynthesis of lovastatin (also known as mevinolin, mevacor or monacolin K), a hypolipidemic inhibitor of (3S)-hydroxymethylglutaryl-coenzyme A (HMG-CoA) reductase (HMGR). The first step in the biosynthesis of lovastatin is the production of dihydromonacolin L acid (DML) by the lovastatin nonaketide synthase lovB and the trans-acting enoyl reductase lovC (called the lovB-lovC megasynthase complex) via condensation of one acetyl-CoA unit and 8 malonyl-CoA units. The formation of the LovB/C complex is essential for the integrity of the catalytic chamber to the complete total synthesis of DML acid. Dihydromonacolin L acid is released from lovB by the thioesterase lovG. Next, dihydromonacolin L acid is oxidized by the dihydromonacolin L monooxygenase lovA twice to form monacolin J acid. The 2-methylbutyrate moiety of lovastatin is synthesized by the lovastatin diketide synthase lovF via condensation of one acetyl-CoA unit and one malonyl-CoA unit. Finally, the covalent attachment of this moiety to monacolin J acid is catalyzed by the transesterase lovD to yield lovastatin. LovD has broad substrate specificity and can also convert monacolin J to simvastatin using alpha-dimethylbutanoyl-S-methyl-3-mercaptopropionate (DMB-S-MMP) as the thioester acyl donor, and can also catalyze the reverse reaction and function as hydrolase in vitro. LovD has much higher activity with LovF-bound 2-methylbutanoate than with free diketide substrates. The protein is Lovastatin nonaketide synthase, enoyl reductase component lovC of Aspergillus terreus.